Reading from the N-terminus, the 350-residue chain is Protein O-mannose kinase (350 aa).

Met-1 bears the N-acetylmethionine mark. Topologically, residues 1–20 are cytoplasmic; it reads MEKQPQNSRRGLAPREVPPA. The chain crosses the membrane as a helical; Signal-anchor for type II membrane protein span at residues 21 to 43; sequence VGLLLIMALMNTLLYLCLDHFFI. Residues 44 to 350 are Lumenal-facing; that stretch reads APRQSTVDPT…AMMSQAREML (307 aa). A Protein kinase domain is found at 81-350; it reads VRQLKRVGEG…AMMSQAREML (270 aa). N-linked (GlcNAc...) asparagine glycans are attached at residues Asn-165, Asn-220, and Asn-235.

The protein belongs to the protein kinase superfamily. Ser/Thr protein kinase family. STKL subfamily. Highest expression is observed in brain, skeletal muscle, kidney and heart in fetal and adult tissues.

The protein resides in the endoplasmic reticulum membrane. The enzyme catalyses 3-O-[beta-D-GalNAc-(1-&gt;3)-beta-D-GlcNAc-(1-&gt;4)-alpha-D-Man]-L-Thr-[protein] + ATP = 3-O-[beta-D-GalNAc-(1-&gt;3)-beta-D-GlcNAc-(1-&gt;4)-(O-6-P-alpha-D-Man)]-Thr-[protein] + ADP + H(+). Functionally, protein O-mannose kinase that specifically mediates phosphorylation at the 6-position of an O-mannose of the trisaccharide (N-acetylgalactosamine (GalNAc)-beta-1,3-N-acetylglucosamine (GlcNAc)-beta-1,4-mannose) to generate phosphorylated O-mannosyl trisaccharide (N-acetylgalactosamine-beta-1,3-N-acetylglucosamine-beta-1,4-(phosphate-6-)mannose). Phosphorylated O-mannosyl trisaccharide is a carbohydrate structure present in alpha-dystroglycan (DAG1), which is required for binding laminin G-like domain-containing extracellular proteins with high affinity. Only shows kinase activity when the GalNAc-beta-3-GlcNAc-beta-terminus is linked to the 4-position of O-mannose, suggesting that this disaccharide serves as the substrate recognition motif. This chain is Protein O-mannose kinase (POMK), found in Homo sapiens (Human).